Consider the following 233-residue polypeptide: uncharacterized protein (233 aa).

Residues Leu21 to Ile41 form a helical membrane-spanning segment. The interval Pro44–Ser163 is disordered. 3 stretches are compositionally biased toward basic and acidic residues: residues Asp48–Gln57, Lys66–Asp108, and Asp135–Asp144.

It localises to the cell membrane. This is an uncharacterized protein from Bacillus subtilis (strain 168).